Reading from the N-terminus, the 176-residue chain is Interleukin-20 (176 aa).

Residues 1-24 (MKGFGLAFGLFSAVGFLLWTPLTG) form the signal peptide. Intrachain disulfides connect cysteine 33–cysteine 126, cysteine 80–cysteine 132, and cysteine 81–cysteine 134.

This sequence belongs to the IL-10 family. As to quaternary structure, forms a 1:1:1 heterotrimeric complex with its primary high-affinity heterodimeric receptor IL20RA/IL20RB.

Its subcellular location is the secreted. Functionally, pro-inflammatory and angiogenic cytokine mainly secreted by monocytes and skin keratinocytes that plays crucial roles in immune responses, regulation of inflammatory responses, hemopoiesis, as well as epidermal cell and keratinocyte differentiation. Enhances tissue remodeling and wound-healing activities and restores the homeostasis of epithelial layers during infection and inflammatory responses to maintain tissue integrity. Affects multiple actin-mediated functions in activated neutrophils leading to inhibition of phagocytosis, granule exocytosis, and migration. Exert its effects via the type I IL-20 receptor complex consisting of IL20RA and IL20RB. Alternatively, can mediate its activity through a second receptor complex called type II IL-20 receptor complex composed of IL22RA1 and IL20RB. Acts as an arteriogenic and vascular remodeling factory by activating a range of signaling processes including phosphorylations of JAK2 and STAT5 as well as activation of the serine and threonine kinases AKT and ERK1/2. Alternatively, can activate STAT3 phosphorylation and transcriptional activity in a JAK2, ERK1/2 and p38 MAPK-dependent manner in keratinocytes. This is Interleukin-20 (Il20) from Mus musculus (Mouse).